The sequence spans 394 residues: 8-amino-7-oxononanoate synthase (394 aa).

R22 lines the substrate pocket. Pyridoxal 5'-phosphate is bound at residue 113-114 (GY). H138 serves as a coordination point for substrate. 3 residues coordinate pyridoxal 5'-phosphate: S184, H212, and T240. K243 carries the N6-(pyridoxal phosphate)lysine modification. Position 359 (T359) interacts with substrate.

Belongs to the class-II pyridoxal-phosphate-dependent aminotransferase family. BioF subfamily. In terms of assembly, homodimer. Pyridoxal 5'-phosphate is required as a cofactor.

The enzyme catalyses 6-carboxyhexanoyl-[ACP] + L-alanine + H(+) = (8S)-8-amino-7-oxononanoate + holo-[ACP] + CO2. It functions in the pathway cofactor biosynthesis; biotin biosynthesis. Functionally, catalyzes the decarboxylative condensation of pimeloyl-[acyl-carrier protein] and L-alanine to produce 8-amino-7-oxononanoate (AON), [acyl-carrier protein], and carbon dioxide. The sequence is that of 8-amino-7-oxononanoate synthase from Janthinobacterium sp. (strain Marseille) (Minibacterium massiliensis).